The sequence spans 936 residues: UPF0746 protein DDB_G0280787 (936 aa).

Residues 1-19 show a composition bias toward basic and acidic residues; sequence MISNKRKEIDTIDGHHEKD. The disordered stretch occupies residues 1 to 30; the sequence is MISNKRKEIDTIDGHHEKDNDDDDSDGIDN. Residues 44–78 enclose the SAP domain; the sequence is SGSTNYRELQIIAKSLGLASNGKKQLVYNRIEGYF. Positions 91-110 are disordered; sequence ETNQQEEKKEEEQQQPQPQE.

The protein belongs to the UPF0746 family.

This chain is UPF0746 protein DDB_G0280787, found in Dictyostelium discoideum (Social amoeba).